Here is a 707-residue protein sequence, read N- to C-terminus: SPX domain-containing membrane protein At4g11810 (707 aa).

In terms of domain architecture, SPX spans 2 to 145; it reads VAFGKKLKER…GYRFTNYYVK (144 aa). 6 helical membrane-spanning segments follow: residues 252-272, 283-303, 320-340, 342-361, 380-400, and 416-436; these read FMSL…TYII, LGAA…AQLF, LIFS…AYDF, SLAL…ARAV, AGFV…AGLL, and LPGW…AISF. The span at 481 to 498 shows a compositional bias: acidic residues; sequence EETEHDEEDDGDGSEESS. The segment at 481 to 503 is disordered; sequence EETEHDEEDDGDGSEESSDDSRK. Helical transmembrane passes span 523–543, 557–577, 586–606, 614–634, and 679–699; these read LLIY…SSVV, IFLF…GSYI, ILLA…HVVI, VISG…NLSL, and MLLN…ILAT.

It belongs to the major facilitator superfamily.

Its subcellular location is the membrane. The polypeptide is SPX domain-containing membrane protein At4g11810 (Arabidopsis thaliana (Mouse-ear cress)).